Here is a 463-residue protein sequence, read N- to C-terminus: ATP-dependent protease ATPase subunit HslU (463 aa).

ATP-binding positions include isoleucine 19, 61–66 (GVGKTE), aspartate 277, glutamate 341, and arginine 413.

The protein belongs to the ClpX chaperone family. HslU subfamily. As to quaternary structure, a double ring-shaped homohexamer of HslV is capped on each side by a ring-shaped HslU homohexamer. The assembly of the HslU/HslV complex is dependent on binding of ATP.

Its subcellular location is the cytoplasm. Its function is as follows. ATPase subunit of a proteasome-like degradation complex; this subunit has chaperone activity. The binding of ATP and its subsequent hydrolysis by HslU are essential for unfolding of protein substrates subsequently hydrolyzed by HslV. HslU recognizes the N-terminal part of its protein substrates and unfolds these before they are guided to HslV for hydrolysis. In Bacillus cereus (strain B4264), this protein is ATP-dependent protease ATPase subunit HslU.